The primary structure comprises 267 residues: Small ribosomal subunit protein uS10m (267 aa).

Residues 1 to 10 (MLSRILGVRN) constitute a mitochondrion transit peptide.

Belongs to the universal ribosomal protein uS10 family. As to quaternary structure, part of the mitochondrial small ribosomal subunit.

It localises to the mitochondrion. Involved in mitochondrial genome encoded proteins translation. Involved in the binding of tRNA to the ribosomes. This chain is Small ribosomal subunit protein uS10m (RSM10), found in Debaryomyces hansenii (strain ATCC 36239 / CBS 767 / BCRC 21394 / JCM 1990 / NBRC 0083 / IGC 2968) (Yeast).